The chain runs to 114 residues: Cytokine SCM-1 beta (114 aa).

The N-terminal stretch at 1-21 (MRLLILALLGICSLTAYIVEG) is a signal peptide. An intrachain disulfide couples Cys-32 to Cys-69. Residues 91–114 (RNNMIQTKPTGTQQSTNTAVTLTG) are disordered.

It belongs to the intercrine gamma family.

Its subcellular location is the secreted. Chemotactic activity for lymphocytes but not for monocytes or neutrophils. This chain is Cytokine SCM-1 beta (XCL2), found in Homo sapiens (Human).